The following is a 497-amino-acid chain: 3-octaprenyl-4-hydroxybenzoate carboxy-lyase (497 aa).

Residue Asn-175 participates in Mn(2+) binding. Residues Ile-178–Arg-180, Arg-192–Leu-194, and Arg-197–Gly-198 each bind prenylated FMN. Mn(2+) is bound at residue Glu-241. Catalysis depends on Asp-290, which acts as the Proton donor.

It belongs to the UbiD family. In terms of assembly, homohexamer. The cofactor is prenylated FMN. Mn(2+) is required as a cofactor.

It is found in the cell membrane. It carries out the reaction a 4-hydroxy-3-(all-trans-polyprenyl)benzoate + H(+) = a 2-(all-trans-polyprenyl)phenol + CO2. It participates in cofactor biosynthesis; ubiquinone biosynthesis. Its function is as follows. Catalyzes the decarboxylation of 3-octaprenyl-4-hydroxy benzoate to 2-octaprenylphenol, an intermediate step in ubiquinone biosynthesis. The sequence is that of 3-octaprenyl-4-hydroxybenzoate carboxy-lyase from Shigella sonnei (strain Ss046).